The chain runs to 318 residues: uncharacterized protein (318 aa).

A helical transmembrane segment spans residues 2–22 (ILELIIVLVLLVLAFKSLKIL). Residues 295 to 318 (SDPEDKGVSEVETESQPAEKPEKH) form a disordered region.

The protein belongs to the band 7/mec-2 family.

It is found in the membrane. This is an uncharacterized protein from Methanothermobacter thermautotrophicus (strain ATCC 29096 / DSM 1053 / JCM 10044 / NBRC 100330 / Delta H) (Methanobacterium thermoautotrophicum).